A 20-amino-acid chain; its full sequence is U1-poneritoxin-Ni1a (20 aa).

Lys-20 is subject to Lysine amide.

It belongs to the non-disulfide-bridged peptide (NDBP) superfamily. Medium-length antimicrobial peptide (group 3) family. Ponericin-W subfamily. As to expression, expressed by the venom gland.

It is found in the secreted. The protein localises to the target cell membrane. Has activity against Gram-positive bacteria. Has insecticidal and hemolytic activities. May act by disrupting the integrity of the bacterial cell membrane. The protein is U1-poneritoxin-Ni1a of Neoponera inversa (Ant).